Consider the following 85-residue polypeptide: Small ribosomal subunit protein bS20 (85 aa).

Positions Met-1–Ile-24 are disordered.

It belongs to the bacterial ribosomal protein bS20 family.

In terms of biological role, binds directly to 16S ribosomal RNA. In Bacillus mycoides (strain KBAB4) (Bacillus weihenstephanensis), this protein is Small ribosomal subunit protein bS20.